We begin with the raw amino-acid sequence, 39 residues long: Mating pheromone Er-11 (39 aa).

Cystine bridges form between C3/C19, C10/C34, and C15/C26.

In terms of assembly, homodimer.

It localises to the secreted. Mating ciliate pheromones (or gamones) are diffusible extracellular communication signals that distinguish different intraspecific classes of cells commonly referred to as 'mating types'. They prepare the latter for conjugation by changing their cell surface properties. In Euplotes raikovi, this protein is Mating pheromone Er-11 (MAT11).